The primary structure comprises 550 residues: Glucose-6-phosphate isomerase (550 aa).

The active-site Proton donor is the glutamate 356. Catalysis depends on residues histidine 387 and lysine 515.

This sequence belongs to the GPI family.

The protein resides in the cytoplasm. It carries out the reaction alpha-D-glucose 6-phosphate = beta-D-fructose 6-phosphate. It functions in the pathway carbohydrate biosynthesis; gluconeogenesis. Its pathway is carbohydrate degradation; glycolysis; D-glyceraldehyde 3-phosphate and glycerone phosphate from D-glucose: step 2/4. Functionally, catalyzes the reversible isomerization of glucose-6-phosphate to fructose-6-phosphate. In Vibrio vulnificus (strain YJ016), this protein is Glucose-6-phosphate isomerase.